Consider the following 731-residue polypeptide: 1,4-alpha-glucan branching enzyme GlgB (731 aa).

The Nucleophile role is filled by Asp-411. The Proton donor role is filled by Glu-464.

It belongs to the glycosyl hydrolase 13 family. GlgB subfamily. Monomer.

It carries out the reaction Transfers a segment of a (1-&gt;4)-alpha-D-glucan chain to a primary hydroxy group in a similar glucan chain.. It participates in glycan biosynthesis; glycogen biosynthesis. In terms of biological role, catalyzes the formation of the alpha-1,6-glucosidic linkages in glycogen by scission of a 1,4-alpha-linked oligosaccharide from growing alpha-1,4-glucan chains and the subsequent attachment of the oligosaccharide to the alpha-1,6 position. In Mycolicibacterium paratuberculosis (strain ATCC BAA-968 / K-10) (Mycobacterium paratuberculosis), this protein is 1,4-alpha-glucan branching enzyme GlgB.